Consider the following 323-residue polypeptide: Methenyltetrahydromethanopterin cyclohydrolase (323 aa).

This sequence belongs to the MCH family.

The protein resides in the cytoplasm. It carries out the reaction 5,10-methenyl-5,6,7,8-tetrahydromethanopterin + H2O = N(5)-formyl-5,6,7,8-tetrahydromethanopterin + H(+). It functions in the pathway one-carbon metabolism; methanogenesis from CO(2); 5,10-methenyl-5,6,7,8-tetrahydromethanopterin from CO(2): step 3/3. Functionally, catalyzes the reversible interconversion of 5-formyl-H(4)MPT to methenyl-H(4)MPT(+). This chain is Methenyltetrahydromethanopterin cyclohydrolase, found in Methanococcus maripaludis (strain C5 / ATCC BAA-1333).